The primary structure comprises 147 residues: Large ribosomal subunit protein bL9 (147 aa).

This sequence belongs to the bacterial ribosomal protein bL9 family.

In terms of biological role, binds to the 23S rRNA. This Phocaeicola vulgatus (strain ATCC 8482 / DSM 1447 / JCM 5826 / CCUG 4940 / NBRC 14291 / NCTC 11154) (Bacteroides vulgatus) protein is Large ribosomal subunit protein bL9.